The sequence spans 619 residues: MALLQIAEPGQSAAPHQHRLAVGIDLGTTNSLVAAVRSGEARTLADAQGRHSLPSIVRYAKEGISVGQEAELHSATDAANTIVSVKRFMGRSLADIEAGSQRFPYQFSASENGLPLFNTPQGQVNPVQVSAEILRPLIARAEDTLGGSLEGAVITVPAYFDDAQRQGTKDAAQLLGVKVLRLLNEPTAAAIAYGLDSGQEGVIAVYDLGGGTFDISILRLNRGVFEVLATGGDSALGGDDFDHLLGGYLAQQWGLDLADTGLGRKLMIEARRVKEALTETDTVTATLEYQGQAYHHDIDRGTFDALIAALVKKTIAACRRALRDAGIDAGEVLETVMVGGSTRVPLVRSEVEAFFGKAPLTSIDPDRVVAIGAAIQADILVGNKPESDLLLLDVIPLSLGIETMGGLVEKIVSRNTTIPVARAQEFTTFKDGQTAMAFHVVQGERELVQDCRSLARFTLKGIPPLAAGAAHIRVTFQVDADGLLSVTAMEKSTGVKSSIQVKPSFGLSDTEIATMLKDSMKHAKEDISRRMLAEQQVEAARVLESLHSALAKDKVLLSEEELNDITAAMAELAEVAKGDDADAILAAIERLDNQTQEFAAKRMDNSIRNALKGQSVDTI.

The protein belongs to the heat shock protein 70 family.

Functionally, chaperone involved in the maturation of iron-sulfur cluster-containing proteins. Has a low intrinsic ATPase activity which is markedly stimulated by HscB. The protein is Chaperone protein HscA homolog of Shewanella amazonensis (strain ATCC BAA-1098 / SB2B).